The sequence spans 101 residues: Small integral membrane protein 14 (101 aa).

Basic and acidic residues predominate over residues 71-81; that stretch reads SDRRTADDAAI. The interval 71–101 is disordered; the sequence is SDRRTADDAAIEKPTGSSDDNTPPPPPPSAM. Residues 92–101 are compositionally biased toward pro residues; sequence TPPPPPPSAM.

This is Small integral membrane protein 14 from Caenorhabditis elegans.